The chain runs to 994 residues: Phosphoenolpyruvate carboxylase (994 aa).

The segment at 1-66 (MKSSGSARAT…QGRTREDKDR (66 aa)) is disordered. 2 stretches are compositionally biased toward low complexity: residues 14 to 25 (AVSSSSAPAHAE) and 41 to 54 (AAAR…AASA). Catalysis depends on residues His-204 and Lys-646.

This sequence belongs to the PEPCase type 1 family. Mg(2+) serves as cofactor.

The enzyme catalyses oxaloacetate + phosphate = phosphoenolpyruvate + hydrogencarbonate. Forms oxaloacetate, a four-carbon dicarboxylic acid source for the tricarboxylic acid cycle. The polypeptide is Phosphoenolpyruvate carboxylase (Burkholderia mallei (strain NCTC 10247)).